Here is a 232-residue protein sequence, read N- to C-terminus: Oxidoreductase 1 (232 aa).

Belongs to the MQO family. The cofactor is FAD.

Oxidoreductase; part of the gene cluster that mediates the biosynthesis of elsinochromes, pigments consisting of at least four interconvertible tautomers (A, B, C and D) that have a core phenolic quinone to which various side chains are attached and which play an important role in fungal pathogenesis. The non-reducing polyketide synthase PKS1 was proposed to iteratively catalyze decarboxylation between acetyl-CoA and malonyl-CoA subunits for polyketide chain elongation. The released polyketide undergoes cyclization to form an aromatic ring, and proceeds via serial modification steps to produce the heptaketide back- bone of elsinochrome. As elsinochrome has a symmetrical structure, two identical heptaketides are fused to form a core 1,2-dihydrobenzo-perylene ring structure, which can then be successively modified to produce the various derivatives of elsinochrome. Some of these reactions may be cooperatively carried out, at least in part, by the products of RDT1, OXR1 and PKS1. PRF1, embedded within the elsinochrome cluster possibly functions to stabilize some of the biosynthetic enzymes required for elsinochrome production. As prefoldin is a hexamer containing 2 a and 4 b subunits, additional prefoldin subunits, whose coding genes may not immediately link to the elsinochrome biosynthetic gene cluster, are required to fulfill the chaperone function. In addition, no methyltransferase-coding gene exists within the biosynthetic gene cluster, even though elsinochrome has four methyl groups at positions C3, C7, C8 and C12. Apparently, the identified gene cluster does not contain the entire entourage of genes responsible for elsinochrome biosynthesis. Once elsinochrome is synthesized, it must be exported outside the fungal cells, which is probably accomplished by the ECT1 transporter, to avoid toxicity. This chain is Oxidoreductase 1, found in Elsinoe fawcettii (Citrus scab fungus).